The sequence spans 459 residues: ATP-binding protein Uup-like (459 aa).

The 219-residue stretch at 132-350 (FEMEDVSYEI…QQANFWASKA (219 aa)) folds into the ABC transporter domain. Residue 164-171 (GPNGCGKT) coordinates ATP. Residues 357-375 (AKKSEPLKEESAVKNDRTS) are compositionally biased toward basic and acidic residues. A disordered region spans residues 357–381 (AKKSEPLKEESAVKNDRTSKPKSVK).

Belongs to the ABC transporter superfamily. ABCF family. Uup subfamily.

The protein localises to the cytoplasm. It carries out the reaction ATP + H2O = ADP + phosphate + H(+). Functionally, might play a role in ribosome assembly or function; this is missing the first ABC transporter domain compared to paralogs. The chain is ATP-binding protein Uup-like (uup-B) from Haemophilus influenzae (strain ATCC 51907 / DSM 11121 / KW20 / Rd).